The primary structure comprises 37 residues: Large ribosomal subunit protein bL36 (37 aa).

It belongs to the bacterial ribosomal protein bL36 family.

The chain is Large ribosomal subunit protein bL36 from Aromatoleum aromaticum (strain DSM 19018 / LMG 30748 / EbN1) (Azoarcus sp. (strain EbN1)).